Consider the following 201-residue polypeptide: Retinol-binding protein 4 (201 aa).

Residues 1 to 18 (MEWVWALVLLAALGGGSA) form the signal peptide. Cystine bridges form between cysteine 22–cysteine 178, cysteine 88–cysteine 192, and cysteine 138–cysteine 147. Substrate is bound at residue glutamine 116. Arginine 139 bears the Omega-N-methylarginine mark.

It belongs to the calycin superfamily. Lipocalin family. As to quaternary structure, interacts with TTR. Interaction with TTR prevents its loss by filtration through the kidney glomeruli. Interacts with STRA6. As to expression, detected in blood plasma (at protein level).

It is found in the secreted. Functionally, retinol-binding protein that mediates retinol transport in blood plasma. Delivers retinol from the liver stores to the peripheral tissues. Transfers the bound all-trans retinol to STRA6, that then facilitates retinol transport across the cell membrane. This is Retinol-binding protein 4 (Rbp4) from Rattus norvegicus (Rat).